The following is a 383-amino-acid chain: Probable acyl-CoA dehydrogenase YdiO (383 aa).

This sequence belongs to the acyl-CoA dehydrogenase family. The cofactor is FAD.

The catalysed reaction is a 2,3-saturated acyl-CoA + A = a 2,3-dehydroacyl-CoA + AH2. In Escherichia coli O157:H7, this protein is Probable acyl-CoA dehydrogenase YdiO (ydiO).